The sequence spans 86 residues: Cytochrome c oxidase subunit 3 (86 aa).

Topologically, residues 1–15 are mitochondrial matrix; the sequence is MAHQAHSYHMVDPSP. Residues 16 to 34 form a helical membrane-spanning segment; sequence WPIFGAAAALLTTSGLVMW. The Mitochondrial intermembrane portion of the chain corresponds to 35 to 40; sequence FHYNSS. A helical membrane pass occupies residues 41–66; that stretch reads ILLAAGLLSMLLVMLQWWREIVREST. Residues 67–86 lie on the Mitochondrial matrix side of the membrane; it reads FQGHHTPTVQKGLRYGMILF.

Belongs to the cytochrome c oxidase subunit 3 family. In terms of assembly, component of the cytochrome c oxidase (complex IV, CIV), a multisubunit enzyme composed of 14 subunits. The complex is composed of a catalytic core of 3 subunits MT-CO1, MT-CO2 and MT-CO3, encoded in the mitochondrial DNA, and 11 supernumerary subunits COX4I, COX5A, COX5B, COX6A, COX6B, COX6C, COX7A, COX7B, COX7C, COX8 and NDUFA4, which are encoded in the nuclear genome. The complex exists as a monomer or a dimer and forms supercomplexes (SCs) in the inner mitochondrial membrane with NADH-ubiquinone oxidoreductase (complex I, CI) and ubiquinol-cytochrome c oxidoreductase (cytochrome b-c1 complex, complex III, CIII), resulting in different assemblies (supercomplex SCI(1)III(2)IV(1) and megacomplex MCI(2)III(2)IV(2)).

Its subcellular location is the mitochondrion inner membrane. It catalyses the reaction 4 Fe(II)-[cytochrome c] + O2 + 8 H(+)(in) = 4 Fe(III)-[cytochrome c] + 2 H2O + 4 H(+)(out). Functionally, component of the cytochrome c oxidase, the last enzyme in the mitochondrial electron transport chain which drives oxidative phosphorylation. The respiratory chain contains 3 multisubunit complexes succinate dehydrogenase (complex II, CII), ubiquinol-cytochrome c oxidoreductase (cytochrome b-c1 complex, complex III, CIII) and cytochrome c oxidase (complex IV, CIV), that cooperate to transfer electrons derived from NADH and succinate to molecular oxygen, creating an electrochemical gradient over the inner membrane that drives transmembrane transport and the ATP synthase. Cytochrome c oxidase is the component of the respiratory chain that catalyzes the reduction of oxygen to water. Electrons originating from reduced cytochrome c in the intermembrane space (IMS) are transferred via the dinuclear copper A center (CU(A)) of subunit 2 and heme A of subunit 1 to the active site in subunit 1, a binuclear center (BNC) formed by heme A3 and copper B (CU(B)). The BNC reduces molecular oxygen to 2 water molecules using 4 electrons from cytochrome c in the IMS and 4 protons from the mitochondrial matrix. The sequence is that of Cytochrome c oxidase subunit 3 (MT-CO3) from Anas platyrhynchos (Mallard).